Here is a 101-residue protein sequence, read N- to C-terminus: NADH-quinone oxidoreductase subunit K (101 aa).

Helical transmembrane passes span leucine 4–leucine 24, isoleucine 30–phenylalanine 50, and phenylalanine 62–valine 82.

This sequence belongs to the complex I subunit 4L family. NDH-1 is composed of 14 different subunits. Subunits NuoA, H, J, K, L, M, N constitute the membrane sector of the complex.

The protein localises to the cell inner membrane. The enzyme catalyses a quinone + NADH + 5 H(+)(in) = a quinol + NAD(+) + 4 H(+)(out). Its function is as follows. NDH-1 shuttles electrons from NADH, via FMN and iron-sulfur (Fe-S) centers, to quinones in the respiratory chain. The immediate electron acceptor for the enzyme in this species is believed to be ubiquinone. Couples the redox reaction to proton translocation (for every two electrons transferred, four hydrogen ions are translocated across the cytoplasmic membrane), and thus conserves the redox energy in a proton gradient. This chain is NADH-quinone oxidoreductase subunit K, found in Stenotrophomonas maltophilia (strain K279a).